We begin with the raw amino-acid sequence, 435 residues long: Secreted RxLR effector protein 35 (435 aa).

An N-terminal signal peptide occupies residues 1-22; sequence MRGAYYIIIALCVVASSQVAAG. Residues 48–65 carry the RxLR-dEER motif; the sequence is RFLRGSRVVHDDLANEER. A disordered region spans residues 336–357; that stretch reads RPKRTTDGNTGTISLPTKPTKT. The span at 342 to 354 shows a compositional bias: polar residues; that stretch reads DGNTGTISLPTKP.

It belongs to the RxLR effector family.

It is found in the secreted. The protein localises to the host nucleus. In terms of biological role, secreted effector that acts as an elicitor that induces cell death in host plant cells. This Plasmopara viticola (Downy mildew of grapevine) protein is Secreted RxLR effector protein 35.